The sequence spans 260 residues: Small ribosomal subunit protein eS4 (260 aa).

One can recognise an S4 RNA-binding domain in the interval 46–111; it reads VPLLILVRDM…RYRVVMNEHH (66 aa).

This sequence belongs to the eukaryotic ribosomal protein eS4 family.

In Methanopyrus kandleri (strain AV19 / DSM 6324 / JCM 9639 / NBRC 100938), this protein is Small ribosomal subunit protein eS4.